A 125-amino-acid polypeptide reads, in one-letter code: Small ribosomal subunit protein uS12m (125 aa).

A disordered region spans residues M1–C27. Residues H10–A23 show a composition bias toward basic and acidic residues.

This sequence belongs to the universal ribosomal protein uS12 family.

The protein resides in the mitochondrion. In terms of biological role, protein S12 is involved in the translation initiation step. The chain is Small ribosomal subunit protein uS12m (RPS12) from Triticum aestivum (Wheat).